The primary structure comprises 437 residues: UDP-N-acetylmuramoylalanine--D-glutamate ligase (437 aa).

115–121 (GSNGKST) serves as a coordination point for ATP.

This sequence belongs to the MurCDEF family.

The protein localises to the cytoplasm. The enzyme catalyses UDP-N-acetyl-alpha-D-muramoyl-L-alanine + D-glutamate + ATP = UDP-N-acetyl-alpha-D-muramoyl-L-alanyl-D-glutamate + ADP + phosphate + H(+). It participates in cell wall biogenesis; peptidoglycan biosynthesis. Cell wall formation. Catalyzes the addition of glutamate to the nucleotide precursor UDP-N-acetylmuramoyl-L-alanine (UMA). The polypeptide is UDP-N-acetylmuramoylalanine--D-glutamate ligase (Vibrio campbellii (strain ATCC BAA-1116)).